We begin with the raw amino-acid sequence, 456 residues long: ATP synthase subunit beta (456 aa).

Residue 135 to 142 participates in ATP binding; it reads GGAGVGKT.

Belongs to the ATPase alpha/beta chains family. F-type ATPases have 2 components, CF(1) - the catalytic core - and CF(0) - the membrane proton channel. CF(1) has five subunits: alpha(3), beta(3), gamma(1), delta(1), epsilon(1). CF(0) has four main subunits: a(1), b(1), b'(1) and c(9-12).

The protein resides in the cellular thylakoid membrane. The enzyme catalyses ATP + H2O + 4 H(+)(in) = ADP + phosphate + 5 H(+)(out). In terms of biological role, produces ATP from ADP in the presence of a proton gradient across the membrane. The catalytic sites are hosted primarily by the beta subunits. The polypeptide is ATP synthase subunit beta (atpD) (Acaryochloris marina (strain MBIC 11017)).